A 934-amino-acid chain; its full sequence is Protein translocase subunit SecA (934 aa).

ATP is bound by residues Gln87, 105 to 109, and Asp515; that span reads GEGKT. The Zn(2+) site is built by Cys918, Cys920, Cys929, and His930.

It belongs to the SecA family. In terms of assembly, monomer and homodimer. Part of the essential Sec protein translocation apparatus which comprises SecA, SecYEG and auxiliary proteins SecDF-YajC and YidC. Zn(2+) is required as a cofactor.

The protein resides in the cell inner membrane. Its subcellular location is the cytoplasm. It carries out the reaction ATP + H2O + cellular proteinSide 1 = ADP + phosphate + cellular proteinSide 2.. Functionally, part of the Sec protein translocase complex. Interacts with the SecYEG preprotein conducting channel. Has a central role in coupling the hydrolysis of ATP to the transfer of proteins into and across the cell membrane, serving both as a receptor for the preprotein-SecB complex and as an ATP-driven molecular motor driving the stepwise translocation of polypeptide chains across the membrane. The chain is Protein translocase subunit SecA from Ralstonia nicotianae (strain ATCC BAA-1114 / GMI1000) (Ralstonia solanacearum).